Consider the following 439-residue polypeptide: Thymidine phosphorylase (439 aa).

Belongs to the thymidine/pyrimidine-nucleoside phosphorylase family. Homodimer.

It carries out the reaction thymidine + phosphate = 2-deoxy-alpha-D-ribose 1-phosphate + thymine. It functions in the pathway pyrimidine metabolism; dTMP biosynthesis via salvage pathway; dTMP from thymine: step 1/2. Its function is as follows. The enzymes which catalyze the reversible phosphorolysis of pyrimidine nucleosides are involved in the degradation of these compounds and in their utilization as carbon and energy sources, or in the rescue of pyrimidine bases for nucleotide synthesis. The sequence is that of Thymidine phosphorylase from Mesorhizobium japonicum (strain LMG 29417 / CECT 9101 / MAFF 303099) (Mesorhizobium loti (strain MAFF 303099)).